The primary structure comprises 558 residues: Urocanate hydratase (558 aa).

NAD(+)-binding positions include 54–55, Gln132, 178–180, Glu198, 244–245, 265–269, 275–276, and Tyr324; these read GG, GMG, NA, QTSAH, and YL. Cys412 is an active-site residue. Gly494 contacts NAD(+).

Belongs to the urocanase family. NAD(+) is required as a cofactor.

The protein resides in the cytoplasm. The enzyme catalyses 4-imidazolone-5-propanoate = trans-urocanate + H2O. Its pathway is amino-acid degradation; L-histidine degradation into L-glutamate; N-formimidoyl-L-glutamate from L-histidine: step 2/3. Its function is as follows. Catalyzes the conversion of urocanate to 4-imidazolone-5-propionate. The sequence is that of Urocanate hydratase from Acinetobacter baumannii (strain ACICU).